Here is a 1343-residue protein sequence, read N- to C-terminus: DNA-directed RNA polymerase subunit beta (1343 aa).

The protein belongs to the RNA polymerase beta chain family. The RNAP catalytic core consists of 2 alpha, 1 beta, 1 beta' and 1 omega subunit. When a sigma factor is associated with the core the holoenzyme is formed, which can initiate transcription.

It carries out the reaction RNA(n) + a ribonucleoside 5'-triphosphate = RNA(n+1) + diphosphate. Its function is as follows. DNA-dependent RNA polymerase catalyzes the transcription of DNA into RNA using the four ribonucleoside triphosphates as substrates. The chain is DNA-directed RNA polymerase subunit beta from Haemophilus influenzae (strain 86-028NP).